The sequence spans 248 residues: MRTAIIAGNWKMNKTVKEAVELVKELKPLVKDAKCDVVVCPTYVCLPAVLEEVKGSNIKVGAQNMHFEESGAYTGEIAPKMLEELGVHYVIIGHSERRQYFNETDETVNKKVKKAFEHNLIPIVCCGESLEEREGNITEKVLEGQIKVGLKELSKEQVEKLVIAYEPIWAIGTGKTATDEQANETIGYIRTVVKDMYGESVADKVRIQYGGSVKPGTIKAQMAKEEIDGALVGGASLKAKDFAAIVNY.

9-11 (NWK) serves as a coordination point for substrate. His-94 serves as the catalytic Electrophile. Glu-166 functions as the Proton acceptor in the catalytic mechanism. Substrate is bound by residues Gly-172, Ser-212, and 233 to 234 (GG).

Belongs to the triosephosphate isomerase family. Homodimer.

It is found in the cytoplasm. It catalyses the reaction D-glyceraldehyde 3-phosphate = dihydroxyacetone phosphate. It participates in carbohydrate biosynthesis; gluconeogenesis. Its pathway is carbohydrate degradation; glycolysis; D-glyceraldehyde 3-phosphate from glycerone phosphate: step 1/1. Involved in the gluconeogenesis. Catalyzes stereospecifically the conversion of dihydroxyacetone phosphate (DHAP) to D-glyceraldehyde-3-phosphate (G3P). This Clostridium botulinum (strain Okra / Type B1) protein is Triosephosphate isomerase.